We begin with the raw amino-acid sequence, 413 residues long: PAB1-binding protein 2 (413 aa).

Over residues 1–23 the composition is skewed to low complexity; it reads MSTETTKPSITTTPTTVLVSPNT. Residues 1-36 form a disordered region; that stretch reads MSTETTKPSITTTPTTVLVSPNTLKRKKGEDTSEEQ. KH domains lie at 66-130, 148-213, and 330-394; these read DVHL…YGMI, EISI…TFYI, and FVQQ…IMLI.

Interacts with PAB1.

It is found in the nucleus. This chain is PAB1-binding protein 2 (PBP2), found in Saccharomyces cerevisiae (strain ATCC 204508 / S288c) (Baker's yeast).